Here is a 70-residue protein sequence, read N- to C-terminus: DNA-directed RNA polymerase subunit omega (70 aa).

This sequence belongs to the RNA polymerase subunit omega family. In terms of assembly, the RNAP catalytic core consists of 2 alpha, 1 beta, 1 beta' and 1 omega subunit. When a sigma factor is associated with the core the holoenzyme is formed, which can initiate transcription.

It catalyses the reaction RNA(n) + a ribonucleoside 5'-triphosphate = RNA(n+1) + diphosphate. Its function is as follows. Promotes RNA polymerase assembly. Latches the N- and C-terminal regions of the beta' subunit thereby facilitating its interaction with the beta and alpha subunits. The protein is DNA-directed RNA polymerase subunit omega of Pelobacter propionicus (strain DSM 2379 / NBRC 103807 / OttBd1).